Here is a 100-residue protein sequence, read N- to C-terminus: Small ribosomal subunit protein bS20 (100 aa).

Basic residues predominate over residues 1–22; sequence MASGKPKKKNPRLASGRKRARQ. Residues 1 to 26 are disordered; the sequence is MASGKPKKKNPRLASGRKRARQGLKL.

This sequence belongs to the bacterial ribosomal protein bS20 family.

Functionally, binds directly to 16S ribosomal RNA. The polypeptide is Small ribosomal subunit protein bS20 (Acidovorax ebreus (strain TPSY) (Diaphorobacter sp. (strain TPSY))).